We begin with the raw amino-acid sequence, 81 residues long: Adipogenin (81 aa).

A helical transmembrane segment spans residues Phe-16 to Leu-36.

It belongs to the adipogenin family.

Its subcellular location is the membrane. The protein resides in the nucleus. Functionally, plays a role in stimulating adipocyte differentiation and development. The chain is Adipogenin from Sus scrofa (Pig).